The following is a 424-amino-acid chain: Protein CLP1 homolog (424 aa).

Residues Glu19, Lys60, and 122-127 contribute to the ATP site; that span reads DVGKST.

Belongs to the Clp1 family. Clp1 subfamily.

It localises to the nucleus. Functionally, required for endonucleolytic cleavage during polyadenylation-dependent pre-mRNA 3'-end formation. This is Protein CLP1 homolog (cbc) from Aedes aegypti (Yellowfever mosquito).